A 254-amino-acid polypeptide reads, in one-letter code: 3-dehydroquinate dehydratase (254 aa).

Residues Glu-47–Arg-49 and Arg-83 contribute to the 3-dehydroquinate site. His-144 functions as the Proton donor/acceptor in the catalytic mechanism. Lys-171 (schiff-base intermediate with substrate) is an active-site residue. Arg-213, Ser-232, and Gln-236 together coordinate 3-dehydroquinate.

The protein belongs to the type-I 3-dehydroquinase family. Homodimer.

It carries out the reaction 3-dehydroquinate = 3-dehydroshikimate + H2O. It functions in the pathway metabolic intermediate biosynthesis; chorismate biosynthesis; chorismate from D-erythrose 4-phosphate and phosphoenolpyruvate: step 3/7. In terms of biological role, involved in the third step of the chorismate pathway, which leads to the biosynthesis of aromatic amino acids. Catalyzes the cis-dehydration of 3-dehydroquinate (DHQ) and introduces the first double bond of the aromatic ring to yield 3-dehydroshikimate. The sequence is that of 3-dehydroquinate dehydratase from Neisseria meningitidis serogroup C / serotype 2a (strain ATCC 700532 / DSM 15464 / FAM18).